The sequence spans 126 residues: Protein ApaG (126 aa).

The ApaG domain occupies Ser2 to His126.

The chain is Protein ApaG from Pseudomonas fluorescens (strain Pf0-1).